The following is a 347-amino-acid chain: MKLTSEKLPKNPFYASVSQYAAKNQKFFQWKKEKTDYTHANLVDKALQLLKERILKGDTLAYFLRGQLYFEEGWYEEALEQFEEIKEKDHQATYQLGVMYYDGLGTTLDAEKGVDYMKKILDSPCPKARHLKFAAAYNLGRAYYEGKGVKRSNEEAERLWLIAADNGNPKASVKAQSMLGLYYSTKEPKELEKAFYWHSEACGNGNLESQGALGLMYLYGQGIRQDTEAALQCLREAAERGNVYAQGNLVEYYYKMKFFTKCVAFSKRIADYDEVHDIPMIAQVTDCLPEFIGRGMAMASFYHARCLQLGLGITRDETTAKHYYSKACRLNPALADELHSLLIRQRI.

The TPR repeat unit spans residues 59-92 (TLAYFLRGQLYFEEGWYEEALEQFEEIKEKDHQA). Sel1-like repeat units follow at residues 93–125 (TYQLGVMYYDGLGTTLDAEKGVDYMKKILDSPC), 133–168 (FAAAYNLGRAYYEGKGVKRSNEEAERLWLIAADNGN), 173–206 (VKAQSMLGLYYSTKEPKELEKAFYWHSEACGNGN), 207–242 (LESQGALGLMYLYGQGIRQDTEAALQCLREAAERGN), 243–277 (VYAQGNLVEYYYKMKFFTKCVAFSKRIADYDEVHD), and 297–332 (AMASFYHARCLQLGLGITRDETTAKHYYSKACRLNP).

Interacts with LRP2.

It localises to the cytoplasm. Functionally, may act as an adapter that regulates LRP2 function. The sequence is that of LRP2-binding protein (LRP2BP) from Homo sapiens (Human).